Reading from the N-terminus, the 112-residue chain is ATP synthase subunit c (112 aa).

2 helical membrane passes run 36 to 56 (FSVL…AIGM) and 81 to 101 (MFIA…IALI).

Belongs to the ATPase C chain family. As to quaternary structure, F-type ATPases have 2 components, F(1) - the catalytic core - and F(0) - the membrane proton channel. F(1) has five subunits: alpha(3), beta(3), gamma(1), delta(1), epsilon(1). F(0) has three main subunits: a(1), b(2) and c(10-14). The alpha and beta chains form an alternating ring which encloses part of the gamma chain. F(1) is attached to F(0) by a central stalk formed by the gamma and epsilon chains, while a peripheral stalk is formed by the delta and b chains.

The protein resides in the cell inner membrane. F(1)F(0) ATP synthase produces ATP from ADP in the presence of a proton or sodium gradient. F-type ATPases consist of two structural domains, F(1) containing the extramembraneous catalytic core and F(0) containing the membrane proton channel, linked together by a central stalk and a peripheral stalk. During catalysis, ATP synthesis in the catalytic domain of F(1) is coupled via a rotary mechanism of the central stalk subunits to proton translocation. In terms of biological role, key component of the F(0) channel; it plays a direct role in translocation across the membrane. A homomeric c-ring of between 10-14 subunits forms the central stalk rotor element with the F(1) delta and epsilon subunits. This Campylobacter jejuni subsp. jejuni serotype O:6 (strain 81116 / NCTC 11828) protein is ATP synthase subunit c.